Here is a 221-residue protein sequence, read N- to C-terminus: Phosphatidylserine decarboxylase proenzyme (221 aa).

S189 acts as the Schiff-base intermediate with substrate; via pyruvic acid in catalysis. S189 carries the post-translational modification Pyruvic acid (Ser); by autocatalysis.

This sequence belongs to the phosphatidylserine decarboxylase family. PSD-A subfamily. As to quaternary structure, heterodimer of a large membrane-associated beta subunit and a small pyruvoyl-containing alpha subunit. Pyruvate is required as a cofactor. Is synthesized initially as an inactive proenzyme. Formation of the active enzyme involves a self-maturation process in which the active site pyruvoyl group is generated from an internal serine residue via an autocatalytic post-translational modification. Two non-identical subunits are generated from the proenzyme in this reaction, and the pyruvate is formed at the N-terminus of the alpha chain, which is derived from the carboxyl end of the proenzyme. The post-translation cleavage follows an unusual pathway, termed non-hydrolytic serinolysis, in which the side chain hydroxyl group of the serine supplies its oxygen atom to form the C-terminus of the beta chain, while the remainder of the serine residue undergoes an oxidative deamination to produce ammonia and the pyruvoyl prosthetic group on the alpha chain.

The protein localises to the cell membrane. The catalysed reaction is a 1,2-diacyl-sn-glycero-3-phospho-L-serine + H(+) = a 1,2-diacyl-sn-glycero-3-phosphoethanolamine + CO2. The protein operates within phospholipid metabolism; phosphatidylethanolamine biosynthesis; phosphatidylethanolamine from CDP-diacylglycerol: step 2/2. Its function is as follows. Catalyzes the formation of phosphatidylethanolamine (PtdEtn) from phosphatidylserine (PtdSer). The sequence is that of Phosphatidylserine decarboxylase proenzyme from Porphyromonas gingivalis (strain ATCC 33277 / DSM 20709 / CIP 103683 / JCM 12257 / NCTC 11834 / 2561).